Reading from the N-terminus, the 119-residue chain is Protein MGF 110-11L (119 aa).

Positions 1–17 (MKVLLGLLLGYSVLILA) are cleaved as a signal peptide.

This sequence belongs to the asfivirus MGF 110 family.

The chain is Protein MGF 110-11L from Ornithodoros (relapsing fever ticks).